The chain runs to 1073 residues: Guanylyl cyclase C (1073 aa).

Positions 1–23 are cleaved as a signal peptide; that stretch reads MKTLLLDLALWSLLFQPGWLSFS. Topologically, residues 24-430 are extracellular; sequence SQVSQNCHNG…PNDITGRGPQ (407 aa). N-linked (GlcNAc...) asparagine glycosylation is found at Asn32, Asn75, Asn79, Asn195, Asn284, Asn307, Asn345, and Asn402. Residues 431 to 454 traverse the membrane as a helical segment; sequence ILMIAVFTLTGAVVLLLLVALLML. At 455 to 1073 the chain is on the cytoplasmic side; sequence RKYRKDYELR…NTTDKESTYF (619 aa). Positions 489-749 constitute a Protein kinase domain; the sequence is LKIDDDKRRD…KIETTLAKIF (261 aa). Residues 824–954 enclose the Guanylate cyclase domain; it reads TIYFSDIVGF…DTVNTASRME (131 aa).

Belongs to the adenylyl cyclase class-4/guanylyl cyclase family. In terms of assembly, homotrimer. Interacts via its C-terminal region with NHERF4. Interacts with the lectin chaperone VIP36. In terms of processing, glycosylation at Asn-75 and/or Asn-79 is required for interaction with VIP36 while glycosylation at Asn-345 and Asn-402 modulates ligand-mediated GUCY2C activation.

It is found in the cell membrane. The protein resides in the endoplasmic reticulum membrane. It carries out the reaction GTP = 3',5'-cyclic GMP + diphosphate. Its function is as follows. Guanylyl cyclase that catalyzes synthesis of cyclic GMP (cGMP) from GTP. Receptor for the E.coli heat-stable enterotoxin; E.coli enterotoxin markedly stimulates the accumulation of cGMP in mammalian cells expressing GUCY2C. Also activated by the endogenous peptides guanylin and uroguanylin. The protein is Guanylyl cyclase C of Homo sapiens (Human).